The chain runs to 85 residues: Antitoxin VapB43 (85 aa).

The interval 37–60 (GLNPPKPQAAGRYRVQPSGKGGLR) is disordered.

Antitoxin component of a type II toxin-antitoxin (TA) system. The chain is Antitoxin VapB43 (vapB43) from Mycobacterium tuberculosis (strain CDC 1551 / Oshkosh).